Consider the following 156-residue polypeptide: ATP synthase subunit b (156 aa).

Residues 5–25 (LTLIGQAIAFAIFVAFCMKFV) traverse the membrane as a helical segment.

It belongs to the ATPase B chain family. In terms of assembly, F-type ATPases have 2 components, F(1) - the catalytic core - and F(0) - the membrane proton channel. F(1) has five subunits: alpha(3), beta(3), gamma(1), delta(1), epsilon(1). F(0) has three main subunits: a(1), b(2) and c(10-14). The alpha and beta chains form an alternating ring which encloses part of the gamma chain. F(1) is attached to F(0) by a central stalk formed by the gamma and epsilon chains, while a peripheral stalk is formed by the delta and b chains.

It localises to the cell inner membrane. Functionally, f(1)F(0) ATP synthase produces ATP from ADP in the presence of a proton or sodium gradient. F-type ATPases consist of two structural domains, F(1) containing the extramembraneous catalytic core and F(0) containing the membrane proton channel, linked together by a central stalk and a peripheral stalk. During catalysis, ATP synthesis in the catalytic domain of F(1) is coupled via a rotary mechanism of the central stalk subunits to proton translocation. In terms of biological role, component of the F(0) channel, it forms part of the peripheral stalk, linking F(1) to F(0). The sequence is that of ATP synthase subunit b from Acinetobacter baylyi (strain ATCC 33305 / BD413 / ADP1).